A 358-amino-acid chain; its full sequence is DnaJ homolog subfamily B member 11 (358 aa).

The signal sequence occupies residues 1-22 (MAPQNLSTFCLLLLYLIGTVIA). The region spanning 25-90 (DFYKILGVPR…EKRKQYDTYG (66 aa)) is the J domain. Thr-188 carries the post-translational modification Phosphothreonine. An N-linked (GlcNAc...) asparagine glycan is attached at Asn-261.

As to quaternary structure, part of a large chaperone multiprotein complex comprising DNAJB11, HSP90B1, HSPA5, HYOU, PDIA2, PDIA4, PDIA6, PPIB, SDF2L1, UGGT1 and very small amounts of ERP29, but not, or at very low levels, CALR nor CANX. Binds to denatured substrates in an ATP-independent manner. Interacts via the J domain with HSPA5 in an ATP-dependent manner. Contains high-mannose Endo H-sensitive carbohydrates. In terms of processing, cys-169, Cys-171, Cys-193 and Cys-196 form intramolecular disulfide bonds. The preferential partner for each Cys is not known.

The protein localises to the endoplasmic reticulum lumen. Its function is as follows. As a co-chaperone for HSPA5 it is required for proper folding, trafficking or degradation of proteins. Binds directly to both unfolded proteins that are substrates for ERAD and nascent unfolded peptide chains, but dissociates from the HSPA5-unfolded protein complex before folding is completed. May help recruiting HSPA5 and other chaperones to the substrate. Stimulates HSPA5 ATPase activity. It is necessary for maturation and correct trafficking of PKD1. This is DnaJ homolog subfamily B member 11 (Dnajb11) from Mus musculus (Mouse).